The chain runs to 168 residues: ATP synthase subunit b (168 aa).

The helical transmembrane segment at 10-30 (STILGNFILVTASFAVLIILI) threads the bilayer.

The protein belongs to the ATPase B chain family. As to quaternary structure, F-type ATPases have 2 components, F(1) - the catalytic core - and F(0) - the membrane proton channel. F(1) has five subunits: alpha(3), beta(3), gamma(1), delta(1), epsilon(1). F(0) has three main subunits: a(1), b(2) and c(10-14). The alpha and beta chains form an alternating ring which encloses part of the gamma chain. F(1) is attached to F(0) by a central stalk formed by the gamma and epsilon chains, while a peripheral stalk is formed by the delta and b chains.

It localises to the cell membrane. Functionally, f(1)F(0) ATP synthase produces ATP from ADP in the presence of a proton or sodium gradient. F-type ATPases consist of two structural domains, F(1) containing the extramembraneous catalytic core and F(0) containing the membrane proton channel, linked together by a central stalk and a peripheral stalk. During catalysis, ATP synthesis in the catalytic domain of F(1) is coupled via a rotary mechanism of the central stalk subunits to proton translocation. In terms of biological role, component of the F(0) channel, it forms part of the peripheral stalk, linking F(1) to F(0). This chain is ATP synthase subunit b, found in Streptococcus suis (strain 98HAH33).